The primary structure comprises 94 residues: uncharacterized protein (94 aa).

This is an uncharacterized protein from Saccharomyces cerevisiae (strain ATCC 204508 / S288c) (Baker's yeast).